Here is a 466-residue protein sequence, read N- to C-terminus: Coagulation factor VII (466 aa).

The first 20 residues, 1-20, serve as a signal peptide directing secretion; sequence MVSQALRLLCLLLGLQGCLA. The propeptide occupies 21–60; it reads AGGVAEASGGETRDMPWKPGPHRVFITQEEAHGVLHRRRR. One can recognise a Gla domain in the interval 61–105; it reads ANAFLEELRPGSLERECKEEQCSFEEAREIFKDLERTKLFWISYS. A 4-carboxyglutamate mark is found at Glu-66, Glu-67, Glu-74, Glu-76, Glu-79, Glu-80, Glu-85, Glu-86, Glu-89, and Glu-95. A disulfide bridge links Cys-77 with Cys-82. The EGF-like 1; calcium-binding domain maps to 106–142; the sequence is DGDQCASSPCQNGGSCKDQLQSYICFCLPAFEGRNCE. 10 disulfides stabilise this stretch: Cys-110–Cys-121, Cys-115–Cys-130, Cys-132–Cys-141, Cys-151–Cys-162, Cys-158–Cys-172, Cys-174–Cys-187, Cys-195–Cys-322, Cys-219–Cys-224, Cys-238–Cys-254, and Cys-370–Cys-389. Residue Ser-112 is glycosylated (O-linked (Glc...) serine; alternate). Ser-112 is a glycosylation site (O-linked (Xyl...) serine; alternate). O-linked (Fuc) serine glycosylation is present at Ser-120. (3R)-3-hydroxyaspartate is present on Asp-123. An EGF-like 2 domain is found at 147–188; it reads DQLICVNENGGCEQYCSDHTGTKRSCRCHEGYSLLADGVSCT. Asn-205 is a glycosylation site (N-linked (GlcNAc...) asparagine). One can recognise a Peptidase S1 domain in the interval 213–452; that stretch reads IVGGKVCPKG…YIEWLQKLMR (240 aa). Residues His-253 and Asp-302 each act as charge relay system in the active site. N-linked (GlcNAc...) asparagine glycosylation occurs at Asn-382. Asp-398 contributes to the substrate binding site. Residues Cys-400 and Cys-428 are joined by a disulfide bond. The active-site Charge relay system is Ser-404.

Belongs to the peptidase S1 family. Heterodimer of a light chain and a heavy chain linked by a disulfide bond. The vitamin K-dependent, enzymatic carboxylation of some glutamate residues allows the modified protein to bind calcium. In terms of processing, the iron and 2-oxoglutarate dependent 3-hydroxylation of aspartate and asparagine is (R) stereospecific within EGF domains. Post-translationally, O-glycosylated. O-fucosylated by POFUT1 on a conserved serine or threonine residue found in the consensus sequence C2-X(4,5)-[S/T]-C3 of EGF domains, where C2 and C3 are the second and third conserved cysteines. Can be either O-glucosylated or O-xylosylated at Ser-112 by POGLUT1.

Its subcellular location is the secreted. It carries out the reaction Selective cleavage of Arg-|-Ile bond in factor X to form factor Xa.. Its function is as follows. Initiates the extrinsic pathway of blood coagulation. Serine protease that circulates in the blood in a zymogen form. Factor VII is converted to factor VIIa by factor Xa, factor XIIa, factor IXa, or thrombin by minor proteolysis. In the presence of tissue factor and calcium ions, factor VIIa then converts factor X to factor Xa by limited proteolysis. Factor VIIa also converts factor IX to factor IXa in the presence of tissue factor and calcium. This Pan paniscus (Pygmy chimpanzee) protein is Coagulation factor VII (F7).